A 64-amino-acid chain; its full sequence is Purotoxin-2 (64 aa).

The interval 1–44 (AKACTPLLHDCSHDRHSCCRGDMFKYVCDCFYPEGEDKTEVCSC) is knottin domain. 4 cysteine pairs are disulfide-bonded: Cys-4/Cys-19, Cys-11/Cys-28, Cys-18/Cys-44, and Cys-30/Cys-42. Positions 45–64 (QQPKSHKIAEKIIDKAKTTL) are linear cationic cytotoxin domain. Residue Leu-64 is modified to Leucine amide.

The protein belongs to the neurotoxin 19 (CSTX) family. 05 (U4-Lctx) subfamily. In terms of processing, amidation at Leu-64 is not mandatory for activity on P2RX3. In terms of tissue distribution, expressed by the venom gland.

Its subcellular location is the secreted. Functionally, enhances the high-affinity desensitization of human P2RX3 purinoceptors. At 50 nM, the toxin decreases the IC(50) for ambient ATP from 2.67 nM to 0.77 nM in human P2RX3. The polypeptide is Purotoxin-2 (Alopecosa marikovskyi (Wolf spider)).